The chain runs to 203 residues: MAHGPRYRVPFRRRREGKTNYRKRLKLLKSGKPRLVVRKSLNHHIAQIIVYDPKGDRTLVSAHTRELIRDFGWKGHCGNTPSAYLLGLLIGYKAKKAGIEEAILDIGLHPPVRGSSVFAVLKGAVDAGLNVPHSPEIFPEDYRIRGEHIAEYARMLKEQDEEKFRRQFGGYLEKGLDPEKLPEHFDEVKARIIEKFESEGARE.

This sequence belongs to the universal ribosomal protein uL18 family. Part of the 50S ribosomal subunit. Contacts the 5S and 23S rRNAs.

Its function is as follows. This is one of the proteins that bind and probably mediate the attachment of the 5S RNA into the large ribosomal subunit, where it forms part of the central protuberance. The chain is Large ribosomal subunit protein uL18 from Pyrococcus abyssi (strain GE5 / Orsay).